Reading from the N-terminus, the 242-residue chain is Platelet-derived growth factor subunit B (242 aa).

A signal peptide spans 1–20 (MNRCWALFLSLCCYLRLVSA). A propeptide spans 21-81 (EGDPIPEELY…ELESLSRGRR (61 aa)) (removed in mature form). N-linked (GlcNAc...) asparagine glycosylation is present at asparagine 63. Disulfide bonds link cysteine 97/cysteine 141, cysteine 130/cysteine 178, and cysteine 134/cysteine 180. The segment covering 219–232 (PPKGKHRKFKHTHD) has biased composition (basic residues). Residues 219–242 (PPKGKHRKFKHTHDKKALKETLGA) are disordered. The segment covering 233–242 (KKALKETLGA) has biased composition (basic and acidic residues).

It belongs to the PDGF/VEGF growth factor family. In terms of assembly, antiparallel homodimer; disulfide-linked. Antiparallel heterodimer with PDGFA; disulfide-linked. The PDGFB homodimer interacts with PDGFRA and PDGFRB homodimers, and with heterodimers formed by PDGFRA and PDGFRB. The heterodimer composed of PDGFA and PDGFB interacts with PDGFRB homodimers, and with heterodimers formed by PDGFRA and PDGFRB. Interacts with XLKD1. Interacts with LRP1. Interacts with SORL1 (via the N-terminal ectodomain). Interacts with CD82; this interaction inhibits PDGFB-mediated signaling pathway.

It is found in the secreted. Functionally, growth factor that plays an essential role in the regulation of embryonic development, cell proliferation, cell migration, survival and chemotaxis. Potent mitogen for cells of mesenchymal origin. Required for normal proliferation and recruitment of pericytes and vascular smooth muscle cells in the central nervous system, skin, lung, heart and placenta. Required for normal blood vessel development, and for normal development of kidney glomeruli. Plays an important role in wound healing. Signaling is modulated by the formation of heterodimers with PDGFA. The polypeptide is Platelet-derived growth factor subunit B (PDGFB) (Canis lupus familiaris (Dog)).